The primary structure comprises 148 residues: Probable DNA-directed RNA polymerases I, II, and III subunit RPABC3 (148 aa).

Residues 16–40 (DPDGKKFDRVSRYFCDAESFKMELI) are non-specific ssDNA binding.

Belongs to the eukaryotic RPB8 RNA polymerase subunit family. Component of the RNA polymerase I (Pol I), RNA polymerase II (Pol II) and RNA polymerase III (Pol III) complexes consisting of at least 13, 12 and 17 subunits, respectively. Directly interacts with POLR2A.

It localises to the nucleus. Functionally, DNA-dependent RNA polymerase catalyzes the transcription of DNA into RNA using the four ribonucleoside triphosphates as substrates. Common component of RNA polymerases I, II and III which synthesize ribosomal RNA precursors, mRNA precursors and many functional non-coding RNAs, and small RNAs, such as 5S rRNA and tRNAs, respectively. This chain is Probable DNA-directed RNA polymerases I, II, and III subunit RPABC3, found in Caenorhabditis briggsae.